The following is a 938-amino-acid chain: RIPOR family member 3 (938 aa).

Phosphoserine is present on residues Ser9, Ser24, and Ser340. Thr345 carries the post-translational modification Phosphothreonine. A phosphoserine mark is found at Ser351 and Ser384. 2 disordered regions span residues 402 to 430 (EMDS…FLPV) and 579 to 603 (FGGS…SPSE).

Belongs to the RIPOR family.

The chain is RIPOR family member 3 from Mus musculus (Mouse).